An 80-amino-acid chain; its full sequence is 14-3-3-like protein 1 (80 aa).

This sequence belongs to the 14-3-3 family.

This Pseudotsuga menziesii (Douglas-fir) protein is 14-3-3-like protein 1.